The primary structure comprises 153 residues: MSLSLDLDLQIAVDSNQLPSQADFETWVRTALGNTLDTAELTIRLVEIAESQSLNHDYRGKDKPTNVLSFPFEAPPGMELPLLGDLVICVAVVEQEALEQNKPLQAHWAHMVIHGCLHLLGYDHIIDQEAEEMESLETQLIEGLGFSNPYKEA.

Zn(2+) is bound by residues His114, His118, and His124.

The protein belongs to the endoribonuclease YbeY family. Zn(2+) serves as cofactor.

It localises to the cytoplasm. In terms of biological role, single strand-specific metallo-endoribonuclease involved in late-stage 70S ribosome quality control and in maturation of the 3' terminus of the 16S rRNA. The protein is Endoribonuclease YbeY of Shewanella denitrificans (strain OS217 / ATCC BAA-1090 / DSM 15013).